Reading from the N-terminus, the 287-residue chain is Vesicle-associated protein 4-3 (287 aa).

The segment covering 1-14 has biased composition (basic and acidic residues); the sequence is MALTEDKSDSDGRR. The interval 1–45 is disordered; sequence MALTEDKSDSDGRRWGKFKLPFRNSNSQAPSASSSSSMATSSSSV. Positions 25-45 are enriched in low complexity; the sequence is SNSQAPSASSSSSMATSSSSV. An MSP domain is found at 99-221; that stretch reads RLKLDPSAKL…EEQVMRVVFL (123 aa).

This sequence belongs to the VAMP-associated protein (VAP) (TC 9.B.17) family.

May play a role in vesicle trafficking. The protein is Vesicle-associated protein 4-3 (PVA43) of Arabidopsis thaliana (Mouse-ear cress).